The sequence spans 239 residues: Isopentenyl-diphosphate Delta-isomerase (239 aa).

Lys43 contacts substrate. Residues His47 and His58 each coordinate Mg(2+). The region spanning 56–210 (LLHRAFSIFL…KVKVTPWFRL (155 aa)) is the Nudix hydrolase domain. Substrate-binding residues include Arg77 and Lys81. Cys93 is an active-site residue. Ser94 contacts substrate. Mg(2+)-binding residues include Glu156 and Glu158. The active site involves Glu158.

It belongs to the IPP isomerase type 1 family. Requires Mg(2+) as cofactor.

The enzyme catalyses isopentenyl diphosphate = dimethylallyl diphosphate. The protein operates within isoprenoid biosynthesis; dimethylallyl diphosphate biosynthesis; dimethylallyl diphosphate from isopentenyl diphosphate: step 1/1. Catalyzes the 1,3-allylic rearrangement of the homoallylic substrate isopentenyl (IPP) to its highly electrophilic allylic isomer, dimethylallyl diphosphate (DMAPP). The sequence is that of Isopentenyl-diphosphate Delta-isomerase (ipi) from Dictyostelium discoideum (Social amoeba).